Here is a 141-residue protein sequence, read N- to C-terminus: Hemoglobin subunit alpha-A (141 aa).

Positions 1 to 141 (VLSAADKTNV…VGTVLTAKYR (141 aa)) constitute a Globin domain. Histidine 58 contacts O2. Position 87 (histidine 87) interacts with heme b.

The protein belongs to the globin family. Heterotetramer of two alpha chains and two beta chains. As to expression, red blood cells.

In terms of biological role, involved in oxygen transport from the lung to the various peripheral tissues. This Turdus merula (Common blackbird) protein is Hemoglobin subunit alpha-A (HBAA).